A 536-amino-acid chain; its full sequence is MAGPSNQTQPPPPVLTQPSLSFTQGLLVGQLSVVLLIGAFIKFFIFGEAPPHPSRNGLSNRTSSHRRSYSLNSISADSSPRTLREKPSTSNILRPVPSSSTNTRSILRKTYYSATPTNPTSKHSRSRPHHSSHQPESLDWFNVLIAQTIAQYRQTAYILKDSPTSSILASLSEALNNPEKKPSFIDSIKVTDISLGEEFPIFSNCRVIAVEDPNSDGGRLQALMDVDLSDDNLSLAVETSLLLNYPKPFSAVLPVALAVSVVRFSGTLCISFVPGPGTSDQTMSPSPSPPKEASAENIAVDHQSPERQSARQRAPHQHKYTNTNTAGATAAATADDNDTHAKLPHGIPKTSLAFSFLPDYRLDLSVRSLIGSRSRLQDVPKVAQLVEARVQAWFEERVVEPRVQVVGLPNIWPRMGRTGVRGSQEETEAGAGGSAPADIPGTAGGDGVGVRGGGGGGGVGGSGGGSMRGTSGWGMGYDGLRYRHNAHGDGGVGAGPGQSAGAALYGGAQGGGGGGGRGGEEQFAIPGSMPDPVVVT.

The Lumenal segment spans residues 1–25; the sequence is MAGPSNQTQPPPPVLTQPSLSFTQG. A helical membrane pass occupies residues 26–46; it reads LLVGQLSVVLLIGAFIKFFIF. At 47–536 the chain is on the cytoplasmic side; that stretch reads GEAPPHPSRN…GSMPDPVVVT (490 aa). Disordered stretches follow at residues 52–135, 275–331, 416–467, and 505–536; these read HPSR…SHQP, GPGT…ATAA, GRTG…GGSM, and YGGA…VVVT. 3 stretches are compositionally biased toward polar residues: residues 69-81, 88-105, and 112-121; these read YSLN…SSPR, STSN…NTRS, and YSATPTNPTS. Basic residues predominate over residues 122–132; sequence KHSRSRPHHSS. The SMP-LTD domain occupies 134-409; that stretch reads QPESLDWFNV…EPRVQVVGLP (276 aa). A compositionally biased stretch (low complexity) spans 321–331; it reads TNTNTAGATAA. Gly residues-rich tracts occupy residues 442–467 and 507–517; these read TAGG…GGSM and GAQGGGGGGGR.

Belongs to the MMM1 family. As to quaternary structure, homodimer. Component of the ER-mitochondria encounter structure (ERMES) or MDM complex, composed of MMM1, MDM10, MDM12 and MDM34. An MMM1 homodimer associates with one molecule of MDM12 on each side in a pairwise head-to-tail manner, and the SMP-LTD domains of MMM1 and MDM12 generate a continuous hydrophobic tunnel for phospholipid trafficking.

It localises to the endoplasmic reticulum membrane. Functionally, component of the ERMES/MDM complex, which serves as a molecular tether to connect the endoplasmic reticulum (ER) and mitochondria. Components of this complex are involved in the control of mitochondrial shape and protein biogenesis, and function in nonvesicular lipid trafficking between the ER and mitochondria. The MDM12-MMM1 subcomplex functions in the major beta-barrel assembly pathway that is responsible for biogenesis of all outer membrane beta-barrel proteins, and acts in a late step after the SAM complex. The MDM10-MDM12-MMM1 subcomplex further acts in the TOM40-specific pathway after the action of the MDM12-MMM1 complex. Essential for establishing and maintaining the structure of mitochondria and maintenance of mtDNA nucleoids. The chain is Maintenance of mitochondrial morphology protein 1 from Ajellomyces dermatitidis (strain ER-3 / ATCC MYA-2586) (Blastomyces dermatitidis).